The following is a 236-amino-acid chain: uncharacterized protein (236 aa).

The N-terminal stretch at 1-29 (MKGGDKMKKLILLMLLLPISLIGCTDEES) is a signal peptide.

This is an uncharacterized protein from Archaeoglobus fulgidus (strain ATCC 49558 / DSM 4304 / JCM 9628 / NBRC 100126 / VC-16).